Here is a 215-residue protein sequence, read N- to C-terminus: Large ribosomal subunit protein uL3 (215 aa).

The tract at residues 134 to 166 (MAHGSKNHRAPGSIGAGTTPGRVFPGKRMPGRM) is disordered.

It belongs to the universal ribosomal protein uL3 family. As to quaternary structure, part of the 50S ribosomal subunit. Forms a cluster with proteins L14 and L19.

Functionally, one of the primary rRNA binding proteins, it binds directly near the 3'-end of the 23S rRNA, where it nucleates assembly of the 50S subunit. This chain is Large ribosomal subunit protein uL3, found in Gloeobacter violaceus (strain ATCC 29082 / PCC 7421).